The following is a 410-amino-acid chain: Metacaspase-1B (410 aa).

The disordered stretch occupies residues 1 to 106 (MYHRNSAPPP…SFGKGAPSNY (106 aa)). Composition is skewed to pro residues over residues 7 to 23 (APPP…PQSQ) and 32 to 52 (PPYP…PPPT). Active-site residues include His201 and Cys257.

It belongs to the peptidase C14B family.

Functionally, involved in cell death (apoptosis). The sequence is that of Metacaspase-1B (casB) from Aspergillus clavatus (strain ATCC 1007 / CBS 513.65 / DSM 816 / NCTC 3887 / NRRL 1 / QM 1276 / 107).